A 385-amino-acid chain; its full sequence is 1-deoxy-D-xylulose 5-phosphate reductoisomerase (385 aa).

NADPH contacts are provided by Thr10, Gly11, Ser12, Ile13, Lys37, and Asn124. Residue Lys125 coordinates 1-deoxy-D-xylulose 5-phosphate. Glu126 contacts NADPH. Asp150 is a binding site for Mn(2+). Ser151, Glu152, Ser176, and His199 together coordinate 1-deoxy-D-xylulose 5-phosphate. Glu152 lines the Mn(2+) pocket. NADPH is bound at residue Gly205. 1-deoxy-D-xylulose 5-phosphate-binding residues include Ser212, Asn217, Lys218, and Glu221. Glu221 serves as a coordination point for Mn(2+).

Belongs to the DXR family. The cofactor is Mg(2+). Mn(2+) is required as a cofactor.

The enzyme catalyses 2-C-methyl-D-erythritol 4-phosphate + NADP(+) = 1-deoxy-D-xylulose 5-phosphate + NADPH + H(+). Its pathway is isoprenoid biosynthesis; isopentenyl diphosphate biosynthesis via DXP pathway; isopentenyl diphosphate from 1-deoxy-D-xylulose 5-phosphate: step 1/6. Functionally, catalyzes the NADPH-dependent rearrangement and reduction of 1-deoxy-D-xylulose-5-phosphate (DXP) to 2-C-methyl-D-erythritol 4-phosphate (MEP). This is 1-deoxy-D-xylulose 5-phosphate reductoisomerase from Clostridium novyi (strain NT).